A 423-amino-acid chain; its full sequence is MAKQIQAIRGMNDILPTQSPLWQKLEAVLRDTVAAYGYSEIRTPIVESTDLFKRSIGEVTDIVEKEMYTFADRNGDLLTLRPEGTASTVRAGNEHGLLYNQEQRLWYMGPMFRHERPQKGRYRQFNQFGVEVYGIASADIDAEVLMMSHRLWQKLGISEHVKLELNTLGDAQERAAYRDALVEFLEQHEEKLDEDSQRRMYSNPLRVLDSKNPDVQALLGDAPALMDYLGEESRGHFAHLCELLEAVGIQYEINPRLVRGLDYYNRTVFEWVTDSLGAQGTVLAGGRYDGLVGQLGGKDTPAVGFAMGLERIVLMLETLALTDDVSGPVDVYVTAMGDDCRVAAIKVAQQLREVDGLKVMSHCGGGNFKKQMKRADKSGAKLAIVIGETELANGQVALKYLREEKEQELVAQDSLAAYVAELI.

It belongs to the class-II aminoacyl-tRNA synthetase family. Homodimer.

Its subcellular location is the cytoplasm. The enzyme catalyses tRNA(His) + L-histidine + ATP = L-histidyl-tRNA(His) + AMP + diphosphate + H(+). The sequence is that of Histidine--tRNA ligase from Shewanella loihica (strain ATCC BAA-1088 / PV-4).